The chain runs to 131 residues: Small ribosomal subunit protein uS11 (131 aa).

It belongs to the universal ribosomal protein uS11 family. Part of the 30S ribosomal subunit. Interacts with proteins S7 and S18. Binds to IF-3.

Functionally, located on the platform of the 30S subunit, it bridges several disparate RNA helices of the 16S rRNA. Forms part of the Shine-Dalgarno cleft in the 70S ribosome. The chain is Small ribosomal subunit protein uS11 from Thermotoga neapolitana (strain ATCC 49049 / DSM 4359 / NBRC 107923 / NS-E).